We begin with the raw amino-acid sequence, 880 residues long: Leucine--tRNA ligase (880 aa).

The 'HIGH' region motif lies at 46-56 (PYPSGALHMGH). The short motif at 638–642 (KMSKS) is the 'KMSKS' region element. Lys641 is an ATP binding site.

This sequence belongs to the class-I aminoacyl-tRNA synthetase family.

The protein localises to the cytoplasm. The catalysed reaction is tRNA(Leu) + L-leucine + ATP = L-leucyl-tRNA(Leu) + AMP + diphosphate. The chain is Leucine--tRNA ligase from Stenotrophomonas maltophilia (strain R551-3).